Reading from the N-terminus, the 150-residue chain is Phosphopantetheine adenylyltransferase (150 aa).

T15 contributes to the substrate binding site. Residues 15 to 16 (TF) and H23 contribute to the ATP site. The substrate site is built by I80 and R94. Residues 95-97 (GIR), E105, and 130-136 (LENISSR) contribute to the ATP site.

Belongs to the bacterial CoaD family. Homohexamer. Mg(2+) serves as cofactor.

Its subcellular location is the cytoplasm. The catalysed reaction is (R)-4'-phosphopantetheine + ATP + H(+) = 3'-dephospho-CoA + diphosphate. Its pathway is cofactor biosynthesis; coenzyme A biosynthesis; CoA from (R)-pantothenate: step 4/5. Reversibly transfers an adenylyl group from ATP to 4'-phosphopantetheine, yielding dephospho-CoA (dPCoA) and pyrophosphate. The polypeptide is Phosphopantetheine adenylyltransferase (Malacoplasma penetrans (strain HF-2) (Mycoplasma penetrans)).